The chain runs to 210 residues: Glycerol-3-phosphate acyltransferase (210 aa).

5 helical membrane-spanning segments follow: residues 10–30 (ALIL…GIVI), 59–79 (PAAL…VLIA), 87–107 (AAQL…WLGF), 116–136 (FLGT…LTWL), and 161–181 (LLLG…LIFI).

The protein belongs to the PlsY family. In terms of assembly, probably interacts with PlsX.

The protein resides in the cell inner membrane. It catalyses the reaction an acyl phosphate + sn-glycerol 3-phosphate = a 1-acyl-sn-glycero-3-phosphate + phosphate. The protein operates within lipid metabolism; phospholipid metabolism. In terms of biological role, catalyzes the transfer of an acyl group from acyl-phosphate (acyl-PO(4)) to glycerol-3-phosphate (G3P) to form lysophosphatidic acid (LPA). This enzyme utilizes acyl-phosphate as fatty acyl donor, but not acyl-CoA or acyl-ACP. The polypeptide is Glycerol-3-phosphate acyltransferase (Cereibacter sphaeroides (strain ATCC 17025 / ATH 2.4.3) (Rhodobacter sphaeroides)).